An 808-amino-acid polypeptide reads, in one-letter code: Copal-8-ol diphosphate hydratase, chloroplastic (808 aa).

A chloroplast-targeting transit peptide spans 1–50 (MAFTFTSAHLFLPVTENHSVHVNYSIPPGNWRLWSTAKGGSNKLDIRRLR). Positions 190–219 (DKCQKGLKFFRDNISKLEKENVEASAQMLS) form a coiled coil. K256 serves as a coordination point for substrate. Positions 391 and 393 each coordinate Mg(2+). Residues 391–394 (DLDD) carry the DXDD motif motif. K477 is a substrate binding site.

This sequence belongs to the terpene synthase family. Mg(2+) is required as a cofactor. As to expression, expressed in stems, leaves and trichomes. Not detected in roots and seeds. Higher expression in young leaves than in fully expanded leaves.

The protein localises to the plastid. It localises to the chloroplast. It carries out the reaction (2E,6E,10E)-geranylgeranyl diphosphate + H2O = 8-hydroxycopalyl diphosphate. Its pathway is secondary metabolite biosynthesis; terpenoid biosynthesis. Involved in the biosynthesis of oxygen-containing labdane-type diterpenes that may be implicated in direct and indirect defense mechanisms. No activity with geranyl diphosphate or farnesyl diphosphate as substrate. In Cistus creticus subsp. creticus (Rock rose), this protein is Copal-8-ol diphosphate hydratase, chloroplastic.